Consider the following 686-residue polypeptide: Glycogenin (686 aa).

UDP contacts are provided by Leu13, Asn16, Tyr19, and Arg82. UDP-alpha-D-glucose is bound by residues Leu13, Asn16, Tyr19, Arg82, Lys91, Asp107, Ala108, Asp109, Asn139, Thr140, Asp166, Asp169, and Gln170. Asp107, Ala108, and Asp109 together coordinate UDP. Asp107 lines the Mn(2+) pocket. Asp109 serves as a coordination point for Mn(2+). Tyr196 and Tyr198 each carry an O-linked (Glc...) tyrosine glycan. UDP is bound by residues His213, Gly216, and Lys219. His213 is a binding site for Mn(2+). Residues Gly216 and Lys219 each contribute to the UDP-alpha-D-glucose site. Disordered regions lie at residues 264 to 331 (VKGE…ANFP), 381 to 444 (PEPT…RGNA), 460 to 533 (KHRR…GVPA), and 603 to 686 (KPLR…VLET). 2 stretches are compositionally biased toward low complexity: residues 285 to 308 (SSQS…YTSH) and 398 to 416 (SAAS…ASPT). The not required for catalytic activity stretch occupies residues 307–686 (SHGASWDASR…TEEERDVLET (380 aa)). Polar residues-rich tracts occupy residues 424 to 442 (VTPT…TTRG) and 471 to 483 (AATS…GRAQ). Acidic residues predominate over residues 677-686 (TEEERDVLET).

The protein belongs to the glycosyltransferase 8 family. Glycogenin subfamily. Interacts with glycogen synthase gsy-1; the interaction is direct. Mn(2+) is required as a cofactor.

It localises to the cytoplasm. Its subcellular location is the vacuole. The enzyme catalyses L-tyrosyl-[glycogenin] + UDP-alpha-D-glucose = alpha-D-glucosyl-L-tyrosyl-[glycogenin] + UDP + H(+). It carries out the reaction [1,4-alpha-D-glucosyl](n)-L-tyrosyl-[glycogenin] + UDP-alpha-D-glucose = [1,4-alpha-D-glucosyl](n+1)-L-tyrosyl-[glycogenin] + UDP + H(+). Self-glucosylating initiator of glycogen synthesis. It catalyzes the formation of a short alpha (1,4)-glucosyl chain covalently attached via a glucose 1-O-tyrosyl linkage to internal tyrosine residues and these chains act as primers for the elongation reaction catalyzed by glycogen synthase. This Neurospora crassa (strain ATCC 24698 / 74-OR23-1A / CBS 708.71 / DSM 1257 / FGSC 987) protein is Glycogenin.